Reading from the N-terminus, the 113-residue chain is Cell cycle protein GpsB (113 aa).

Residues Leu32–Ala71 are a coiled coil.

It belongs to the GpsB family. As to quaternary structure, forms polymers through the coiled coil domains. Interacts with PBP1, MreC and EzrA.

It localises to the cytoplasm. Divisome component that associates with the complex late in its assembly, after the Z-ring is formed, and is dependent on DivIC and PBP2B for its recruitment to the divisome. Together with EzrA, is a key component of the system that regulates PBP1 localization during cell cycle progression. Its main role could be the removal of PBP1 from the cell pole after pole maturation is completed. Also contributes to the recruitment of PBP1 to the division complex. Not essential for septum formation. This chain is Cell cycle protein GpsB, found in Lactiplantibacillus plantarum (strain ATCC BAA-793 / NCIMB 8826 / WCFS1) (Lactobacillus plantarum).